Here is a 302-residue protein sequence, read N- to C-terminus: GTPase Era (302 aa).

The Era-type G domain maps to 4-171 (KAGFVALVGR…KEKIVSLLPE (168 aa)). Residues 12–19 (GRTNVGKS) form a G1 region. Residue 12-19 (GRTNVGKS) participates in GTP binding. The segment at 38–42 (QTTRN) is G2. The G3 stretch occupies residues 59–62 (DTPG). GTP is bound by residues 59-63 (DTPGI) and 121-124 (NKID). The segment at 121 to 124 (NKID) is G4. A G5 region spans residues 150 to 152 (ISA). In terms of domain architecture, KH type-2 spans 202–280 (LEEEVPHGVY…FLDLWVKTRK (79 aa)).

It belongs to the TRAFAC class TrmE-Era-EngA-EngB-Septin-like GTPase superfamily. Era GTPase family. In terms of assembly, monomer.

The protein resides in the cytoplasm. It is found in the cell membrane. An essential GTPase that binds both GDP and GTP, with rapid nucleotide exchange. Plays a role in 16S rRNA processing and 30S ribosomal subunit biogenesis and possibly also in cell cycle regulation and energy metabolism. The chain is GTPase Era from Thermoanaerobacter pseudethanolicus (strain ATCC 33223 / 39E) (Clostridium thermohydrosulfuricum).